Here is a 541-residue protein sequence, read N- to C-terminus: Protein yellow (541 aa).

Residues 1–21 (MFQDKGWVLVTLIALVTPSWA) form the signal peptide. Asparagine 144 carries N-linked (GlcNAc...) asparagine glycosylation.

The protein belongs to the major royal jelly protein family.

Its subcellular location is the secreted. Functionally, controls the pigmentation pattern of the adult cuticle and larval mouth parts. This is Protein yellow (y) from Drosophila erecta (Fruit fly).